Reading from the N-terminus, the 126-residue chain is Aspartate 1-decarboxylase (126 aa).

Catalysis depends on S25, which acts as the Schiff-base intermediate with substrate; via pyruvic acid. S25 bears the Pyruvic acid (Ser) mark. Substrate is bound at residue T57. The active-site Proton donor is Y58. 73–75 (GAA) serves as a coordination point for substrate.

Belongs to the PanD family. As to quaternary structure, heterooctamer of four alpha and four beta subunits. Pyruvate is required as a cofactor. In terms of processing, is synthesized initially as an inactive proenzyme, which is activated by self-cleavage at a specific serine bond to produce a beta-subunit with a hydroxyl group at its C-terminus and an alpha-subunit with a pyruvoyl group at its N-terminus.

The protein resides in the cytoplasm. It catalyses the reaction L-aspartate + H(+) = beta-alanine + CO2. The protein operates within cofactor biosynthesis; (R)-pantothenate biosynthesis; beta-alanine from L-aspartate: step 1/1. In terms of biological role, catalyzes the pyruvoyl-dependent decarboxylation of aspartate to produce beta-alanine. The sequence is that of Aspartate 1-decarboxylase from Tolumonas auensis (strain DSM 9187 / NBRC 110442 / TA 4).